The sequence spans 258 residues: Tryptophan synthase alpha chain (258 aa).

Catalysis depends on proton acceptor residues Glu52 and Asp63.

This sequence belongs to the TrpA family. In terms of assembly, tetramer of two alpha and two beta chains.

It carries out the reaction (1S,2R)-1-C-(indol-3-yl)glycerol 3-phosphate + L-serine = D-glyceraldehyde 3-phosphate + L-tryptophan + H2O. It functions in the pathway amino-acid biosynthesis; L-tryptophan biosynthesis; L-tryptophan from chorismate: step 5/5. Its function is as follows. The alpha subunit is responsible for the aldol cleavage of indoleglycerol phosphate to indole and glyceraldehyde 3-phosphate. The chain is Tryptophan synthase alpha chain from Streptococcus pneumoniae (strain P1031).